The chain runs to 343 residues: S-adenosylmethionine:tRNA ribosyltransferase-isomerase (343 aa).

Belongs to the QueA family. As to quaternary structure, monomer.

The protein resides in the cytoplasm. The enzyme catalyses 7-aminomethyl-7-carbaguanosine(34) in tRNA + S-adenosyl-L-methionine = epoxyqueuosine(34) in tRNA + adenine + L-methionine + 2 H(+). It functions in the pathway tRNA modification; tRNA-queuosine biosynthesis. Its function is as follows. Transfers and isomerizes the ribose moiety from AdoMet to the 7-aminomethyl group of 7-deazaguanine (preQ1-tRNA) to give epoxyqueuosine (oQ-tRNA). The protein is S-adenosylmethionine:tRNA ribosyltransferase-isomerase of Geobacter sulfurreducens (strain ATCC 51573 / DSM 12127 / PCA).